The sequence spans 470 residues: Uronate isomerase (470 aa).

This sequence belongs to the metallo-dependent hydrolases superfamily. Uronate isomerase family.

The enzyme catalyses D-glucuronate = D-fructuronate. The catalysed reaction is aldehydo-D-galacturonate = keto-D-tagaturonate. It participates in carbohydrate metabolism; pentose and glucuronate interconversion. The protein is Uronate isomerase of Cutibacterium acnes (strain DSM 16379 / KPA171202) (Propionibacterium acnes).